We begin with the raw amino-acid sequence, 737 residues long: Protein kinase C epsilon type (737 aa).

In terms of domain architecture, C2 spans 1 to 117; the sequence is MVVFNGLLKI…NGSRHFEDWI (117 aa). S62 bears the Phosphoserine mark. Residues 169 to 220 form a Phorbol-ester/DAG-type 1 zinc finger; sequence GHKFMATYLRQPTYCSHCRDFIWGVIGKQGYQCQVCTCVVHKRCHELIITKC. Positions 223–228 match the Interaction with actin motif; that stretch reads LKKQET. The residue at position 228 (T228) is a Phosphothreonine. S234 carries the post-translational modification Phosphoserine. The segment at 242–292 adopts a Phorbol-ester/DAG-type 2 zinc-finger fold; that stretch reads PHKFGIHNYKVPTFCDHCGSLLWGLLRQGLQCKVCKMNVHRRCETNVAPNC. T309 is modified (phosphothreonine). Residues 310-356 form a disordered region; the sequence is PDKITNSGQRRKKLAAGAESPQPASGNSPSEDDRSKSAPTSPCDQEL. Residues S316, S329, S337, and S346 each carry the phosphoserine modification. T349 is modified (phosphothreonine). S350 bears the Phosphoserine; by MAPK11 and MAPK14 mark. Residues S368 and S388 each carry the phosphoserine modification. The segment at 369–398 is disordered; sequence FDNRGEEHRASSSTDGQLASPGENGEVRQG. Residues 408-668 form the Protein kinase domain; sequence FNFIKVLGKG…EDAIKQHPFF (261 aa). ATP contacts are provided by residues 414-422 and K437; that span reads LGKGSFGKV. D532 functions as the Proton acceptor in the catalytic mechanism. Position 566 is a phosphothreonine; by PDPK1 (T566). The AGC-kinase C-terminal domain occupies 669 to 737; it reads KEIDWVLLEQ…FSYFGEDLMP (69 aa). A phosphothreonine mark is found at T703 and T710. S729 bears the Phosphoserine mark.

The protein belongs to the protein kinase superfamily. AGC Ser/Thr protein kinase family. PKC subfamily. As to quaternary structure, forms a ternary complex with TRIM63 and RACK1/GN2BL1. Can form a complex with PDLIM5 and N-type calcium channel. Interacts with COPB1. Interacts with DGKQ. Interacts with STAT3. Interacts with YWHAB. Interacts with HSP90AB1; promotes functional activation in a heat shock-dependent manner. Interacts (via phorbol-ester/DAG-type 2 domain) with PRPH and VIM. Interacts with NLRP5/MATER. Post-translationally, phosphorylation on Thr-566 by PDPK1 triggers autophosphorylation on Ser-729. Phosphorylation in the hinge domain at Ser-350 by MAPK11 or MAPK14, Ser-346 by GSK3B and Ser-368 by autophosphorylation is required for interaction with YWHAB. In response to growth factors, phosphorylated at Thr-703 and Ser-729 by the mTORC2 complex, promoting autophosphorylation and activation of PRKCE.

It is found in the cytoplasm. The protein resides in the cytoskeleton. Its subcellular location is the cell membrane. It localises to the perinuclear region. The protein localises to the nucleus. The enzyme catalyses L-seryl-[protein] + ATP = O-phospho-L-seryl-[protein] + ADP + H(+). It catalyses the reaction L-threonyl-[protein] + ATP = O-phospho-L-threonyl-[protein] + ADP + H(+). With respect to regulation, novel PKCs (PRKCD, PRKCE, PRKCH and PRKCQ) are calcium-insensitive, but activated by diacylglycerol (DAG) and phosphatidylserine. Three specific sites; Thr-566 (activation loop of the kinase domain), Thr-710 (turn motif) and Ser-729 (hydrophobic region), need to be phosphorylated for its full activation. Calcium-independent, phospholipid- and diacylglycerol (DAG)-dependent serine/threonine-protein kinase that plays essential roles in the regulation of multiple cellular processes linked to cytoskeletal proteins, such as cell adhesion, motility, migration and cell cycle, functions in neuron growth and ion channel regulation, and is involved in immune response, cancer cell invasion and regulation of apoptosis. Mediates cell adhesion to the extracellular matrix via integrin-dependent signaling, by mediating angiotensin-2-induced activation of integrin beta-1 (ITGB1) in cardiac fibroblasts. Phosphorylates MARCKS, which phosphorylates and activates PTK2/FAK, leading to the spread of cardiomyocytes. Involved in the control of the directional transport of ITGB1 in mesenchymal cells by phosphorylating vimentin (VIM), an intermediate filament (IF) protein. In epithelial cells, associates with and phosphorylates keratin-8 (KRT8), which induces targeting of desmoplakin at desmosomes and regulates cell-cell contact. Phosphorylates IQGAP1, which binds to CDC42, mediating epithelial cell-cell detachment prior to migration. During cytokinesis, forms a complex with YWHAB, which is crucial for daughter cell separation, and facilitates abscission by a mechanism which may implicate the regulation of RHOA. In cardiac myocytes, regulates myofilament function and excitation coupling at the Z-lines, where it is indirectly associated with F-actin via interaction with COPB1. During endothelin-induced cardiomyocyte hypertrophy, mediates activation of PTK2/FAK, which is critical for cardiomyocyte survival and regulation of sarcomere length. Plays a role in the pathogenesis of dilated cardiomyopathy via persistent phosphorylation of troponin I (TNNI3). Involved in nerve growth factor (NFG)-induced neurite outgrowth and neuron morphological change independently of its kinase activity, by inhibition of RHOA pathway, activation of CDC42 and cytoskeletal rearrangement. May be involved in presynaptic facilitation by mediating phorbol ester-induced synaptic potentiation. Phosphorylates gamma-aminobutyric acid receptor subunit gamma-2 (GABRG2), which reduces the response of GABA receptors to ethanol and benzodiazepines and may mediate acute tolerance to the intoxicating effects of ethanol. Upon PMA treatment, phosphorylates the capsaicin- and heat-activated cation channel TRPV1, which is required for bradykinin-induced sensitization of the heat response in nociceptive neurons. Is able to form a complex with PDLIM5 and N-type calcium channel, and may enhance channel activities and potentiates fast synaptic transmission by phosphorylating the pore-forming alpha subunit CACNA1B (CaV2.2). Downstream of TLR4, plays an important role in the lipopolysaccharide (LPS)-induced immune response by phosphorylating and activating TICAM2/TRAM, which in turn activates the transcription factor IRF3 and subsequent cytokines production. In differentiating erythroid progenitors, is regulated by EPO and controls the protection against the TNFSF10/TRAIL-mediated apoptosis, via BCL2. May be involved in the regulation of the insulin-induced phosphorylation and activation of AKT1. Phosphorylates NLRP5/MATER and may thereby modulate AKT pathway activation in cumulus cells. Phosphorylates and activates LRRK1, which phosphorylates RAB proteins involved in intracellular trafficking. The protein is Protein kinase C epsilon type (Prkce) of Rattus norvegicus (Rat).